A 2150-amino-acid chain; its full sequence is A disintegrin and metalloproteinase with thrombospondin motifs gon-1 (2150 aa).

Residues Met-1–Ala-28 form the signal peptide. A propeptide spanning residues Leu-29–Arg-273 is cleaved from the precursor. N-linked (GlcNAc...) asparagine glycosylation is found at Asn-134, Asn-213, Asn-243, and Asn-248. Residues His-280 to Pro-493 enclose the Peptidase M12B domain. Disulfide bonds link Cys-402–Cys-488 and Cys-440–Cys-470. Residue His-424 coordinates Zn(2+). Glu-425 is an active-site residue. His-428 and His-434 together coordinate Zn(2+). A Disintegrin domain is found at Phe-503–Ile-587. The TSP type-1 1 domain occupies Asp-588 to Pro-643. Intrachain disulfides connect Cys-600-Cys-637, Cys-604-Cys-642, and Cys-615-Cys-627. Asn-842 carries an N-linked (GlcNAc...) asparagine glycan. 11 consecutive TSP type-1 domains span residues Cys-943–Ser-1003, Gly-1004–Asn-1057, Pro-1060–Thr-1115, Trp-1116–His-1165, Ser-1168–Pro-1227, Phe-1228–His-1277, Pro-1280–Asp-1339, Pro-1352–Ser-1409, Tyr-1410–Pro-1469, His-1474–Pro-1524, and Thr-1527–Arg-1585. Residues Asn-1139 and Asn-1199 are each glycosylated (N-linked (GlcNAc...) asparagine). Asn-1370 and Asn-1432 each carry an N-linked (GlcNAc...) asparagine glycan. Residues Asn-1528, Asn-1590, Asn-1606, and Asn-1654 are each glycosylated (N-linked (GlcNAc...) asparagine). Residues Asn-1590–Ser-1614 are disordered. The segment covering Thr-1592–Ser-1614 has biased composition (low complexity). 5 TSP type-1 domains span residues Pro-1621–Arg-1675, His-1678–Pro-1736, Ala-1737–Asn-1793, Cys-1794–Asp-1866, and Ser-1867–Leu-1924. 6 cysteine pairs are disulfide-bonded: Cys-1679–Cys-1718, Cys-1690–Cys-1694, Cys-1690–Cys-1730, Cys-1694–Cys-1735, Cys-1705–Cys-1718, and Cys-1730–Cys-1735. N-linked (GlcNAc...) asparagine glycosylation is found at Asn-1828 and Asn-1855. Residues Leu-1924–Asn-2123 form the GON domain. N-linked (GlcNAc...) asparagine glycosylation is found at Asn-1942, Asn-1960, and Asn-1997.

Requires Zn(2+) as cofactor. Expressed by the gonadal distal tip cells (DTCs). Expressed in muscles, including body wall, vulval and anal depressor muscles. Expressed in motor neurons and in ASI and ASJ neurons.

Its subcellular location is the secreted. The protein resides in the extracellular space. It is found in the extracellular matrix. It localises to the basement membrane. The protein localises to the endoplasmic reticulum. Its subcellular location is the golgi apparatus. Secreted metalloprotease required for distal tip cell (DTC) migration along the body wall basement membranes, a key step that promotes gonad morphogenesis. Probably acts by remodeling the basement membrane during cell migration. Required to restrict presynaptic growth at the neuromuscular junctions (NMJ) in late larval stage and in adult motor neurons, probably by controlling collagen IV emb-9 degradation, a component of the synapse basement membrane. Also involved in the organization of adult muscle morphology. Has a protease-independent function in promoting the transport from the endoplasmic reticulum to the Golgi apparatus of a variety of secretory cargos. Required for the secretion of insulin-like peptide ins-7, daf-28 and ins-18 and TGF beta-like protein daf-7. In peripheral tissues, negatively regulates insulin-mediated daf-16 translocation and thereby negatively regulates lifespan and dauer formation. This is A disintegrin and metalloproteinase with thrombospondin motifs gon-1 from Caenorhabditis elegans.